A 302-amino-acid polypeptide reads, in one-letter code: Glycine--tRNA ligase alpha subunit (302 aa).

This sequence belongs to the class-II aminoacyl-tRNA synthetase family. In terms of assembly, tetramer of two alpha and two beta subunits.

It is found in the cytoplasm. The enzyme catalyses tRNA(Gly) + glycine + ATP = glycyl-tRNA(Gly) + AMP + diphosphate. This chain is Glycine--tRNA ligase alpha subunit, found in Xanthomonas oryzae pv. oryzae (strain PXO99A).